The chain runs to 1420 residues: Protein NPAT (1420 aa).

Residues 1-319 (MLLPSDVARL…EEAIQDILEQ (319 aa)) form an interaction with MIZF region. Residues 3–35 (LPSDVARLVLGYLQQENLTSTCQTFILESSNLK) enclose the LisH domain. 2 required for activation of histone gene transcription and interaction with MIZF regions span residues 5–25 (SDVARLVLGYLQQENLTSTCQ) and 121–145 (KRQRWLASQAAPVSSELLVLPYASG). Residues 179-190 (QPQSTVTNTAGE) show a composition bias toward polar residues. The segment at 179–236 (QPQSTVTNTAGESLNIIPGPQERKTQTSLMSPGRRKSESQKKSLTSSGPHSSRNFQDP) is disordered. Serine 209 is modified (phosphoserine). The span at 220–235 (KSLTSSGPHSSRNFQD) shows a compositional bias: polar residues. The mediates transcriptional activation stretch occupies residues 263 to 339 (KLAENINKFL…FDLFDYGKTK (77 aa)). Residues 534–573 (SQSTPLTTKPSKSQLCENSNNIIKVKTNPQASESADSSET) show a composition bias toward polar residues. Disordered stretches follow at residues 534 to 612 (SQST…GESL), 625 to 670 (EEPA…KDGD), and 696 to 727 (KNNNSLSSESGGSVGVSPETQNTDGKTSNSTE). Residues serine 552 and serine 598 each carry the phosphoserine modification. Residues 628 to 652 (APSDKQLSNDAASVDLNPTESKTEP) are required for acceleration of G1 phase. Residues 632-658 (KQLSNDAASVDLNPTESKTEPLQSASA) show a composition bias toward polar residues. The span at 697 to 712 (NNNSLSSESGGSVGVS) shows a compositional bias: low complexity. Residues 713 to 727 (PETQNTDGKTSNSTE) show a composition bias toward polar residues. Residues serine 771 and serine 773 each carry the phosphoserine; by CDK2 modification. Required for acceleration of G1 phase regions lie at residues 822-847 (QNEDGIAFSANVAPCVPKDGGYIQLM) and 1033-1048 (KMEDTTISLSGERVAP). 3 disordered regions span residues 1089–1190 (ASFS…NGSL), 1202–1234 (LTKKQATPSNNKNATSVGGTVKDQKQEQSKPAS), and 1249–1297 (SPAN…SMPR). A Phosphoserine; by CDK2 modification is found at serine 1096. Glycyl lysine isopeptide (Lys-Gly) (interchain with G-Cter in SUMO2) cross-links involve residues lysine 1112 and lysine 1144. Composition is skewed to basic and acidic residues over residues 1135–1146 (TVKEVQSEKKVS) and 1154–1177 (SLHKATANKENELCGDGERPKNAD). Phosphoserine is present on serine 1146. The segment covering 1205-1219 (KQATPSNNKNATSVG) has biased composition (polar residues). Lysine 1223 is subject to N6-acetyllysine. A required for acceleration of G1 phase region spans residues 1223–1247 (KDQKQEQSKPASSLIGAEILQDVPI). At serine 1249 the chain carries Phosphoserine. Threonine 1264 bears the Phosphothreonine; by CDK2 mark. Basic and acidic residues predominate over residues 1270 to 1279 (GEKHKEEPSD). Lysine 1274 participates in a covalent cross-link: Glycyl lysine isopeptide (Lys-Gly) (interchain with G-Cter in SUMO2). A required for acceleration of G1 phase region spans residues 1319 to 1342 (ENSVSMAAHTLMILSRAAIARTTA). The residue at position 1343 (threonine 1343) is a Phosphothreonine; by CDK2. Residues 1348-1400 (NTQQFRTSSRSTTKKRKIEELDECERNSRTSGKNLANSSVPMKKKKIKKKKLP) are disordered. Positions 1376–1387 (RTSGKNLANSSV) are enriched in polar residues. A compositionally biased stretch (basic residues) spans 1389-1399 (MKKKKIKKKKL).

The protein belongs to the NPAT family. Interacts with the cylin/CDK complexes CCNE1/CDK2 and CCNA1/CDK2. Interacts with BZW1, CASP8AP2, CREBBP, MIZF and YY1. Interacts with the RUVBL1, RUVBL2 and TRRAP subunits of the NuA4 complex. May also interact with GAPDH, NME1, NME2 and STIP1. In terms of processing, phosphorylated at Ser-771, Ser-773, Ser-1096, Thr-1264 and Thr-1343 by CCNE1/CDK2 at G1-S transition and until prophase, which promotes association with histone gene clusters and stimulates activation of histone transcription. Also phosphorylated by CCNA1/CDK2 in vitro.

Its subcellular location is the nucleus. Functionally, required for progression through the G1 and S phases of the cell cycle and for S phase entry. Activates transcription of the histone H2A, histone H2B, histone H3 and histone H4 genes in conjunction with MIZF. Also positively regulates the ATM, MIZF and PRKDC promoters. Transcriptional activation may be accomplished at least in part by the recruitment of the NuA4 histone acetyltransferase (HAT) complex to target gene promoters. Required for early embryonic development. In Mus musculus (Mouse), this protein is Protein NPAT (Npat).